Here is a 123-residue protein sequence, read N- to C-terminus: Large ribosomal subunit protein bL19 (123 aa).

Belongs to the bacterial ribosomal protein bL19 family.

In terms of biological role, this protein is located at the 30S-50S ribosomal subunit interface and may play a role in the structure and function of the aminoacyl-tRNA binding site. The sequence is that of Large ribosomal subunit protein bL19 from Bdellovibrio bacteriovorus (strain ATCC 15356 / DSM 50701 / NCIMB 9529 / HD100).